The primary structure comprises 256 residues: Probable hydroxyacylglutathione hydrolase glo2 (256 aa).

6 residues coordinate Zn(2+): His-63, His-65, Asp-67, His-68, His-118, and Asp-139. Substrate is bound by residues Arg-148, 178–180, and 250–253; these read HEY and RDMK. His-178 contributes to the Zn(2+) binding site.

Belongs to the metallo-beta-lactamase superfamily. Glyoxalase II family. Requires Zn(2+) as cofactor.

The protein localises to the cytoplasm. It is found in the nucleus. The catalysed reaction is an S-(2-hydroxyacyl)glutathione + H2O = a 2-hydroxy carboxylate + glutathione + H(+). It catalyses the reaction (R)-S-lactoylglutathione + H2O = (R)-lactate + glutathione + H(+). The protein operates within secondary metabolite metabolism; methylglyoxal degradation; (R)-lactate from methylglyoxal: step 2/2. In terms of biological role, thiolesterase that catalyzes the hydrolysis of S-D-lactoylglutathione to form glutathione and D-lactic acid. Involved in the metabolism of methylglyoxal, a toxic compound for yeast proliferation, by converting methylglyoxal to lactate via S-D-lactoylglutathione by sequential enzyme reactions catalyzed by glyoxalase I and glyoxalase II. In Schizosaccharomyces pombe (strain 972 / ATCC 24843) (Fission yeast), this protein is Probable hydroxyacylglutathione hydrolase glo2 (glo2).